A 201-amino-acid polypeptide reads, in one-letter code: MMQDVSSSPVSPADDSLSNSEEEPDRQQPPSGKRGGRKRRSSRRSAGGGAGPGGAAGGGVGGGDEPGSPAQGKRGKKSAGCGGGGGGGAGGGGSSSGGGSPQSYEELQTQRVMANVRERQRTQSLNEAFAALPKIIPTLPSDKLSKIQTLKLAARYIDFLYQVLQSDELDSKMASYVAHERLSYAFSVWRMEGAWSMSASH.

Over residues 1-18 (MMQDVSSSPVSPADDSLS) the composition is skewed to low complexity. A disordered region spans residues 1 to 106 (MMQDVSSSPV…GGGSPQSYEE (106 aa)). Residues 34 to 43 (RGGRKRRSSR) are compositionally biased toward basic residues. Gly residues-rich tracts occupy residues 46-65 (AGGG…GGDE) and 80-100 (GCGG…GGGS). In terms of domain architecture, bHLH spans 109 to 160 (TQRVMANVRERQRTQSLNEAFAALPKIIPTLPSDKLSKIQTLKLAARYIDFL). The sufficient for transactivation activity stretch occupies residues 162-190 (QVLQSDELDSKMASYVAHERLSYAFSVWR).

Efficient DNA binding requires dimerization with another bHLH protein. Homodimer or heterodimer with E proteins such as TCF3. ID1 binds preferentially to TCF3 but does not interact efficiently with TWIST1 so ID1 levels control the amount of TCF3 available to dimerize with TWIST and thus determine the type of dimer formed.

The protein resides in the nucleus. Its function is as follows. Acts as a transcriptional regulator. Inhibits myogenesis by sequestrating E proteins, inhibiting trans-activation by MEF2, and inhibiting DNA-binding by MYOD1 through physical interaction. This interaction probably involves the basic domains of both proteins. Also represses expression of pro-inflammatory cytokines such as TNFA and IL1B. Regulates cranial suture patterning and fusion. Activates transcription as a heterodimer with E proteins. Regulates gene expression differentially, depending on dimer composition. Homodimers induce expression of FGFR2 and POSTN while heterodimers repress FGFR2 and POSTN expression and induce THBS1 expression. Heterodimerization is also required for osteoblast differentiation. Represses the activity of the circadian transcriptional activator: NPAS2-BMAL1 heterodimer. The chain is Twist-related protein 1 (TWIST1) from Pan troglodytes (Chimpanzee).